The following is a 580-amino-acid chain: Phosphomethylpyrimidine synthase (580 aa).

A disordered region spans residues 1–58; the sequence is MTPTQNEIHPKHSYSPIRKHGLEVPETEIALDDSPSGPNEPFRIYRTRGPETDPTLGL. Substrate is bound by residues Asn180, Met209, Tyr238, His274, 294–296, 335–338, and Glu374; these read SRG and DGLR. His378 contributes to the Zn(2+) binding site. Position 401 (Tyr401) interacts with substrate. Residue His442 participates in Zn(2+) binding. [4Fe-4S] cluster is bound by residues Cys522, Cys525, and Cys530. Positions 554-580 are disordered; sequence VGASDSTEGMKEKSREFVAGGGEVYRE.

This sequence belongs to the ThiC family. [4Fe-4S] cluster is required as a cofactor.

The catalysed reaction is 5-amino-1-(5-phospho-beta-D-ribosyl)imidazole + S-adenosyl-L-methionine = 4-amino-2-methyl-5-(phosphooxymethyl)pyrimidine + CO + 5'-deoxyadenosine + formate + L-methionine + 3 H(+). The protein operates within cofactor biosynthesis; thiamine diphosphate biosynthesis. Its function is as follows. Catalyzes the synthesis of the hydroxymethylpyrimidine phosphate (HMP-P) moiety of thiamine from aminoimidazole ribotide (AIR) in a radical S-adenosyl-L-methionine (SAM)-dependent reaction. The sequence is that of Phosphomethylpyrimidine synthase from Corynebacterium efficiens (strain DSM 44549 / YS-314 / AJ 12310 / JCM 11189 / NBRC 100395).